We begin with the raw amino-acid sequence, 142 residues long: Large ribosomal subunit protein uL13 (142 aa).

Belongs to the universal ribosomal protein uL13 family. In terms of assembly, part of the 50S ribosomal subunit.

In terms of biological role, this protein is one of the early assembly proteins of the 50S ribosomal subunit, although it is not seen to bind rRNA by itself. It is important during the early stages of 50S assembly. In Acholeplasma laidlawii (strain PG-8A), this protein is Large ribosomal subunit protein uL13.